We begin with the raw amino-acid sequence, 167 residues long: NAD(P)H-quinone oxidoreductase subunit I, chloroplastic (167 aa).

2 4Fe-4S ferredoxin-type domains span residues 55–84 (GRIHFEFDKCIACEVCVRVCPIDLPVVDWK) and 95–124 (LNYSIDFGICIFCGNCVEYCPTNCLSMTEE). The [4Fe-4S] cluster site is built by Cys-64, Cys-67, Cys-70, Cys-74, Cys-104, Cys-107, Cys-110, and Cys-114.

Belongs to the complex I 23 kDa subunit family. As to quaternary structure, NDH is composed of at least 16 different subunits, 5 of which are encoded in the nucleus. The cofactor is [4Fe-4S] cluster.

Its subcellular location is the plastid. It localises to the chloroplast thylakoid membrane. It catalyses the reaction a plastoquinone + NADH + (n+1) H(+)(in) = a plastoquinol + NAD(+) + n H(+)(out). The enzyme catalyses a plastoquinone + NADPH + (n+1) H(+)(in) = a plastoquinol + NADP(+) + n H(+)(out). Functionally, NDH shuttles electrons from NAD(P)H:plastoquinone, via FMN and iron-sulfur (Fe-S) centers, to quinones in the photosynthetic chain and possibly in a chloroplast respiratory chain. The immediate electron acceptor for the enzyme in this species is believed to be plastoquinone. Couples the redox reaction to proton translocation, and thus conserves the redox energy in a proton gradient. The polypeptide is NAD(P)H-quinone oxidoreductase subunit I, chloroplastic (Arabis hirsuta (Hairy rock-cress)).